A 436-amino-acid polypeptide reads, in one-letter code: 3-ketoacyl-CoA thiolase (436 aa).

The active-site Acyl-thioester intermediate is Cys99. Residues His392 and Cys422 each act as proton acceptor in the active site.

The protein belongs to the thiolase-like superfamily. Thiolase family. As to quaternary structure, heterotetramer of two alpha chains (FadJ) and two beta chains (FadI).

It localises to the cytoplasm. The catalysed reaction is an acyl-CoA + acetyl-CoA = a 3-oxoacyl-CoA + CoA. The protein operates within lipid metabolism; fatty acid beta-oxidation. Catalyzes the final step of fatty acid oxidation in which acetyl-CoA is released and the CoA ester of a fatty acid two carbons shorter is formed. The sequence is that of 3-ketoacyl-CoA thiolase from Escherichia coli O1:K1 / APEC.